The following is a 199-amino-acid chain: Transmembrane protein 223 (199 aa).

The Mitochondrial matrix segment spans residues 1 to 43; the sequence is MVASVPLRNVSHLLSVLRSQNVPRYLQNGVPRDVLLFRHERGR. Residues 44 to 64 form a helical membrane-spanning segment; it reads FFAILGLFCAGQGIFWTSLAV. Over 65-94 the chain is Mitochondrial intermembrane; the sequence is AALSRPLSRVPAEAPNRSYQDLRSALWRYG. The helical transmembrane segment at 95 to 115 threads the bilayer; the sequence is LAVGCGTMGVLVLGAGLLYSL. Residues 116–199 are Mitochondrial matrix-facing; the sequence is RSVRSVMLLA…DNTVGAYRSL (84 aa).

The protein belongs to the TMEM223 family. Associates with the mitochondrial ribosome.

It localises to the mitochondrion inner membrane. Mitochondrial ribosome-associated protein involved in the first steps of cytochrome c oxidase complex (complex IV) biogenesis. Stimulates the translation of MT-CO1 mRNA and is a constituent of early MT-CO1 assembly intermediates. This Mus musculus (Mouse) protein is Transmembrane protein 223.